Consider the following 153-residue polypeptide: Small ribosomal subunit protein bS6 (153 aa).

Residues 97–153 (EEGPSAMMRKADRDRERDDRGGGFRGERDGGGFRGDRGDRGDRGPRRPRDEETADEE) form a disordered region. Residues 105–147 (RKADRDRERDDRGGGFRGERDGGGFRGDRGDRGDRGPRRPRDE) show a composition bias toward basic and acidic residues.

Belongs to the bacterial ribosomal protein bS6 family.

Binds together with bS18 to 16S ribosomal RNA. The protein is Small ribosomal subunit protein bS6 of Bradyrhizobium sp. (strain BTAi1 / ATCC BAA-1182).